The chain runs to 384 residues: L-type lectin-like domain-containing protein C4F6.05c (384 aa).

Positions 1–19 (MKFCSLFHVLSFCCTLAYA) are cleaved as a signal peptide. Residues 20-224 (VPKSQFLQLH…DLVALSNLNI (205 aa)) enclose the L-type lectin-like domain. The Extracellular segment spans residues 20–353 (VPKSQFLQLH…AMGNAYSPYN (334 aa)). Positions 227-251 (PDTSNNENLNPTSNTKQSVGDNTSP) are disordered. The helical transmembrane segment at 354–374 (LTNFMVFLLLGAIVSYGIMLV) threads the bilayer. Topologically, residues 375–384 (RRDRRRHKYL) are cytoplasmic.

It is found in the membrane. The protein resides in the endoplasmic reticulum. Its subcellular location is the golgi apparatus. The chain is L-type lectin-like domain-containing protein C4F6.05c from Schizosaccharomyces pombe (strain 972 / ATCC 24843) (Fission yeast).